A 387-amino-acid polypeptide reads, in one-letter code: Aminodeoxyfutalosine synthase (387 aa).

The Radical SAM core domain maps to 52–279 (VHFNVNRHLN…ARTQMATGAE (228 aa)). [4Fe-4S] cluster contacts are provided by Cys66, Cys70, and Cys73.

This sequence belongs to the radical SAM superfamily. MqnE family. Requires [4Fe-4S] cluster as cofactor.

It carries out the reaction 3-[(1-carboxyvinyl)-oxy]benzoate + S-adenosyl-L-methionine + H2O = 6-amino-6-deoxyfutalosine + hydrogencarbonate + L-methionine + H(+). It participates in quinol/quinone metabolism; menaquinone biosynthesis. Its function is as follows. Radical SAM enzyme that catalyzes the addition of the adenosyl radical to the double bond of 3-[(1-carboxyvinyl)oxy]benzoate, leading to aminodeoxyfutalosine (AFL), a key intermediate in the formation of menaquinone (MK, vitamin K2) from chorismate. The sequence is that of Aminodeoxyfutalosine synthase from Streptomyces coelicolor (strain ATCC BAA-471 / A3(2) / M145).